Consider the following 951-residue polypeptide: Valine--tRNA ligase (951 aa).

Positions 42–52 (PNVTGSLHMGH) match the 'HIGH' region motif. The 'KMSKS' region signature appears at 554–558 (KMSKS). Residue Lys557 coordinates ATP. Residues 882 to 951 (LIDKDAELAR…EEQKATIAAL (70 aa)) adopt a coiled-coil conformation.

It belongs to the class-I aminoacyl-tRNA synthetase family. ValS type 1 subfamily. In terms of assembly, monomer.

Its subcellular location is the cytoplasm. It carries out the reaction tRNA(Val) + L-valine + ATP = L-valyl-tRNA(Val) + AMP + diphosphate. Functionally, catalyzes the attachment of valine to tRNA(Val). As ValRS can inadvertently accommodate and process structurally similar amino acids such as threonine, to avoid such errors, it has a 'posttransfer' editing activity that hydrolyzes mischarged Thr-tRNA(Val) in a tRNA-dependent manner. The polypeptide is Valine--tRNA ligase (Vibrio vulnificus (strain CMCP6)).